We begin with the raw amino-acid sequence, 347 residues long: Ribosomal RNA small subunit methyltransferase C (347 aa).

Belongs to the methyltransferase superfamily. RsmC family. As to quaternary structure, monomer.

The protein resides in the cytoplasm. It carries out the reaction guanosine(1207) in 16S rRNA + S-adenosyl-L-methionine = N(2)-methylguanosine(1207) in 16S rRNA + S-adenosyl-L-homocysteine + H(+). Specifically methylates the guanine in position 1207 of 16S rRNA in the 30S particle. The protein is Ribosomal RNA small subunit methyltransferase C of Shewanella baltica (strain OS155 / ATCC BAA-1091).